Consider the following 95-residue polypeptide: Aspartyl/glutamyl-tRNA(Asn/Gln) amidotransferase subunit C (95 aa).

Belongs to the GatC family. Heterotrimer of A, B and C subunits.

It catalyses the reaction L-glutamyl-tRNA(Gln) + L-glutamine + ATP + H2O = L-glutaminyl-tRNA(Gln) + L-glutamate + ADP + phosphate + H(+). The enzyme catalyses L-aspartyl-tRNA(Asn) + L-glutamine + ATP + H2O = L-asparaginyl-tRNA(Asn) + L-glutamate + ADP + phosphate + 2 H(+). Its function is as follows. Allows the formation of correctly charged Asn-tRNA(Asn) or Gln-tRNA(Gln) through the transamidation of misacylated Asp-tRNA(Asn) or Glu-tRNA(Gln) in organisms which lack either or both of asparaginyl-tRNA or glutaminyl-tRNA synthetases. The reaction takes place in the presence of glutamine and ATP through an activated phospho-Asp-tRNA(Asn) or phospho-Glu-tRNA(Gln). This Clostridium botulinum (strain 657 / Type Ba4) protein is Aspartyl/glutamyl-tRNA(Asn/Gln) amidotransferase subunit C.